The following is a 1060-amino-acid chain: Bumetanide-sensitive sodium-(potassium)-chloride cotransporter (1060 aa).

Topologically, residues 1–122 are cytoplasmic; sequence MNDENRFNVS…KSPTPAVGIK (122 aa). 2 helical membrane passes run 123–143 and 154–174; these read LGWIQGVFIPCLLNIWGVMLF and GIGLSLVIIAISAIVCVITTL. Residues 175–197 lie on the Cytoplasmic side of the membrane; it reads SMSAICTNGEVKGGGIYYIISRS. 2 helical membrane passes run 198–218 and 250–270; these read LGPEFGASVGIIFAFANAVAA and IVGTVALLVMCIICAIGMDWE. The Cytoplasmic segment spans residues 271-275; sequence SKAQN. 2 helical membrane passes run 276–296 and 332–352; these read FLIAIIVGAMVDFVVGTIMGP and FFSVFAIFFPSVTGIQAGANI. Residues 353 to 367 are Cytoplasmic-facing; the sequence is SGDLKDPASAIPKGT. Residues 368 to 388 form a helical membrane-spanning segment; sequence LLALLISMVSYTLMVLFAGGG. N-linked (GlcNAc...) asparagine glycosylation is found at N396, N404, and N419. The chain crosses the membrane as a helical span at residues 432–452; it reads VMQLMSAWGPFIYGGCWAATL. The Cytoplasmic portion of the chain corresponds to 453–497; it reads STALTNLLSVPRLIQALGVDRIYPGLIFFSKPYGRHGEPYRGYVL. 2 helical membrane-spanning segments follow: residues 498 to 518 and 563 to 583; these read TFFVSLLFLLIADLNTIAPLI and CVAIMLLVHWVMSLVTFAIFF. The Cytoplasmic portion of the chain corresponds to 584–642; sequence TLYLIVHYRRPDVNWGSSTQAQMYKTALSSAHALARTGEHVKNYWPQLLVLAGRPQARP. A helical transmembrane segment spans residues 643–663; it reads ALVDLGNLISKAGSLMIVGDI. N-linked (GlcNAc...) asparagine glycosylation occurs at N816. A helical transmembrane segment spans residues 882–902; it reads TLDVWWLYDDGGLTILLPYII. Residues 903 to 1060 lie on the Cytoplasmic side of the membrane; it reads SQRSAWANCK…NHTSVLTFYS (158 aa).

Belongs to the SLC12A transporter family.

The protein localises to the membrane. Its function is as follows. Electrically silent transporter system. Mediates sodium and chloride reabsorption. Plays a vital role in the regulation of ionic balance and cell volume. The polypeptide is Bumetanide-sensitive sodium-(potassium)-chloride cotransporter (Manduca sexta (Tobacco hawkmoth)).